We begin with the raw amino-acid sequence, 94 residues long: Ribonuclease P protein component 1 (94 aa).

It belongs to the eukaryotic/archaeal RNase P protein component 1 family. Consists of a catalytic RNA component and at least 4-5 protein subunits.

The protein resides in the cytoplasm. The catalysed reaction is Endonucleolytic cleavage of RNA, removing 5'-extranucleotides from tRNA precursor.. Part of ribonuclease P, a protein complex that generates mature tRNA molecules by cleaving their 5'-ends. In Thermofilum pendens (strain DSM 2475 / Hrk 5), this protein is Ribonuclease P protein component 1.